The sequence spans 311 residues: Glutaminase (311 aa).

Positions 66, 116, 162, 169, 193, 245, and 263 each coordinate substrate.

The protein belongs to the glutaminase family. In terms of assembly, homotetramer.

The enzyme catalyses L-glutamine + H2O = L-glutamate + NH4(+). The sequence is that of Glutaminase from Rhodopseudomonas palustris (strain BisB5).